A 315-amino-acid chain; its full sequence is CID domain-containing protein 1 (315 aa).

A CID domain is found at 1 to 135; sequence MADFTEQTLR…RLHEVHQQVK (135 aa). Residues 227–273 are a coiled coil; that stretch reads MLEEYVKRLKNETNERETLESNLNMLIENVRMSIEHHEKLCREVKRR.

This is CID domain-containing protein 1 (cids-1) from Caenorhabditis elegans.